A 243-amino-acid polypeptide reads, in one-letter code: Ubiquinone/menaquinone biosynthesis C-methyltransferase UbiE (243 aa).

S-adenosyl-L-methionine is bound by residues Thr69, Asp90, and 116-117 (DA).

The protein belongs to the class I-like SAM-binding methyltransferase superfamily. MenG/UbiE family.

It carries out the reaction a 2-demethylmenaquinol + S-adenosyl-L-methionine = a menaquinol + S-adenosyl-L-homocysteine + H(+). The catalysed reaction is a 2-methoxy-6-(all-trans-polyprenyl)benzene-1,4-diol + S-adenosyl-L-methionine = a 5-methoxy-2-methyl-3-(all-trans-polyprenyl)benzene-1,4-diol + S-adenosyl-L-homocysteine + H(+). It functions in the pathway quinol/quinone metabolism; menaquinone biosynthesis; menaquinol from 1,4-dihydroxy-2-naphthoate: step 2/2. It participates in cofactor biosynthesis; ubiquinone biosynthesis. In terms of biological role, methyltransferase required for the conversion of demethylmenaquinol (DMKH2) to menaquinol (MKH2) and the conversion of 2-polyprenyl-6-methoxy-1,4-benzoquinol (DDMQH2) to 2-polyprenyl-3-methyl-6-methoxy-1,4-benzoquinol (DMQH2). The protein is Ubiquinone/menaquinone biosynthesis C-methyltransferase UbiE of Cupriavidus metallidurans (strain ATCC 43123 / DSM 2839 / NBRC 102507 / CH34) (Ralstonia metallidurans).